A 200-amino-acid polypeptide reads, in one-letter code: Inner membrane-spanning protein YciB (200 aa).

6 helical membrane passes run 7 to 27 (HPLF…FVNA), 32 to 52 (FAAT…SYVV), 56 to 76 (IPLM…LTLV), 93 to 113 (LFAA…AIMF), 126 to 146 (ILTF…EIIW), and 153 to 173 (FWVG…AIAQ).

Belongs to the YciB family.

Its subcellular location is the cell inner membrane. Plays a role in cell envelope biogenesis, maintenance of cell envelope integrity and membrane homeostasis. This is Inner membrane-spanning protein YciB from Bradyrhizobium sp. (strain ORS 278).